The chain runs to 403 residues: MSKFNRIHLVVLDSVGIGAAPDADKFFNAGVADTDSDTLGHISETAGLSVPNMVKIGLGNISRPIPLKTVPTEDNPTGYVTKLEEVSLGKDTMTGHWEIMGLNITEPFDTFWNGFPEEILTKIEEFSGRKIIREANKPYSGTAVIDDFGPRQMETGELIVYTSADPVLQIAAHEDIIPVEELYKICEYARSITLERPALLGRIIARPYVGEPGNFTRTANRHDYAVSPFQDTVLNKLADAGVPTYAVGKINDIFNGSGITNDMGHNKSNSHGIDTLIKTLQLPEFTKGFSFTNLVDFDANFGHRRDPEGYRDCLHEFDNRLPEIIANMKEDDLLLITADHGNDPTYAGTDHTREYIPLLAYSASFTGNGLIPQGHFADISATVAENFGVDAAMIGESFLGHLK.

Residues D13, D298, H303, D339, H340, and H351 each contribute to the Mn(2+) site.

Belongs to the phosphopentomutase family. Mn(2+) serves as cofactor.

It is found in the cytoplasm. The catalysed reaction is 2-deoxy-alpha-D-ribose 1-phosphate = 2-deoxy-D-ribose 5-phosphate. It carries out the reaction alpha-D-ribose 1-phosphate = D-ribose 5-phosphate. The protein operates within carbohydrate degradation; 2-deoxy-D-ribose 1-phosphate degradation; D-glyceraldehyde 3-phosphate and acetaldehyde from 2-deoxy-alpha-D-ribose 1-phosphate: step 1/2. Its function is as follows. Isomerase that catalyzes the conversion of deoxy-ribose 1-phosphate (dRib-1-P) and ribose 1-phosphate (Rib-1-P) to deoxy-ribose 5-phosphate (dRib-5-P) and ribose 5-phosphate (Rib-5-P), respectively. The sequence is that of Phosphopentomutase from Streptococcus pyogenes serotype M18 (strain MGAS8232).